The primary structure comprises 511 residues: Caspase-8 (511 aa).

The propeptide occupies 1 to 242; it reads MSGHNILTQL…MDGNGIANES (242 aa). Active-site residues include His352 and Cys393. A propeptide spanning residues 406–415 is cleaved from the precursor; sequence KINASTKSPC.

Belongs to the peptidase C14A family. Heterotetramer that consists of two anti-parallel arranged heterodimers, each one formed by a 15 kDa (caspase-8 subunit p15) and a 10 kDa (caspase-8 subunit p10) subunit. Interacts with the N-terminus of Fadd.

The protein resides in the cytoplasm. It catalyses the reaction Strict requirement for Asp at position P1 and has a preferred cleavage sequence of (Leu/Asp/Val)-Glu-Thr-Asp-|-(Gly/Ser/Ala).. Functionally, effector of the programmed cell death (PCD) activators rpr, grim and W. May play an apoptotic role in the germline as well as soma. Role in immune response, required to resist Gram-negative bacterial infections by regulating DptA. Fadd interacts with Dredd, Fadd promotes cleavage of Dredd and is necessary and sufficient for enhancing Dredd-induced apoptosis. This chain is Caspase-8, found in Drosophila pseudoobscura pseudoobscura (Fruit fly).